Consider the following 277-residue polypeptide: Alpha carbonic anhydrase 3 (277 aa).

Positions 1 to 19 are cleaved as a signal peptide; that stretch reads MKTIILFVTFLALSSSSLA. The Alpha-carbonic anhydrase domain occupies 24–259; sequence TEFHYKPGEI…LNGRLVYLNE (236 aa). A disulfide bridge links cysteine 49 with cysteine 209. Residues asparagine 70 and asparagine 107 are each glycosylated (N-linked (GlcNAc...) asparagine). Positions 117, 119, and 136 each coordinate Zn(2+). Substrate is bound at residue 205–206; the sequence is TT. The interval 257–277 is disordered; that stretch reads LNEQSSPSPTPRLRIPRVGPV.

The protein belongs to the alpha-class carbonic anhydrase family. Zn(2+) is required as a cofactor. N-glycosylated. As to expression, expressed in flowers and siliques.

The protein localises to the plastid. Its subcellular location is the chloroplast stroma. It catalyses the reaction hydrogencarbonate + H(+) = CO2 + H2O. In terms of biological role, reversible hydration of carbon dioxide. The polypeptide is Alpha carbonic anhydrase 3 (ACA3) (Arabidopsis thaliana (Mouse-ear cress)).